The following is a 117-amino-acid chain: Large ribosomal subunit protein bL20 (117 aa).

The protein belongs to the bacterial ribosomal protein bL20 family.

Binds directly to 23S ribosomal RNA and is necessary for the in vitro assembly process of the 50S ribosomal subunit. It is not involved in the protein synthesizing functions of that subunit. The sequence is that of Large ribosomal subunit protein bL20 from Geotalea uraniireducens (strain Rf4) (Geobacter uraniireducens).